The chain runs to 264 residues: Glutamate racemase (264 aa).

Substrate-binding positions include 10 to 11 and 42 to 43; these read DS and YG. Cys-73 serves as the catalytic Proton donor/acceptor. Residue 74–75 participates in substrate binding; it reads NT. Cys-183 (proton donor/acceptor) is an active-site residue. 184–185 provides a ligand contact to substrate; it reads TH.

The protein belongs to the aspartate/glutamate racemases family.

The catalysed reaction is L-glutamate = D-glutamate. Its pathway is cell wall biogenesis; peptidoglycan biosynthesis. Provides the (R)-glutamate required for cell wall biosynthesis. This chain is Glutamate racemase, found in Streptococcus uberis (strain ATCC BAA-854 / 0140J).